Reading from the N-terminus, the 244-residue chain is DNA repair protein RecO (244 aa).

This sequence belongs to the RecO family.

Functionally, involved in DNA repair and RecF pathway recombination. This chain is DNA repair protein RecO, found in Geobacter metallireducens (strain ATCC 53774 / DSM 7210 / GS-15).